A 317-amino-acid chain; its full sequence is Melanocyte-stimulating hormone receptor (317 aa).

The Extracellular portion of the chain corresponds to 1–37 (MPVLGSQRRLLGSLNCTPPATFPLTLAPNRTGPQCLE). Asn29 carries an N-linked (GlcNAc...) asparagine glycan. Residues 38 to 63 (VAIPDGLFLSLGLVSLVENVLVVAAI) traverse the membrane as a helical segment. The Cytoplasmic segment spans residues 64-72 (AKNRNLQSP). A helical membrane pass occupies residues 73 to 93 (MYYFICCLAMSDLLVSVSNVL). At 94–118 (ETAVMLLLEAGALAARAAVVQQLDN) the chain is on the extracellular side. A helical transmembrane segment spans residues 119–140 (VIDVLICGSMVSSLCFLGAIAV). The Cytoplasmic portion of the chain corresponds to 141 to 163 (DRYISIFYALRYHSVVTLPRAWR). The helical transmembrane segment at 164 to 183 (IIAAIWVASILTSLLFITYY) threads the bilayer. Topologically, residues 184–191 (NHTVVLLC) are extracellular. Residues 192–211 (LVGFFIAMLALMAVLYVHML) form a helical membrane-spanning segment. The Cytoplasmic segment spans residues 212–240 (ARACQHARGIARLQKRQRPIHQGFGLKGA). A helical transmembrane segment spans residues 241-266 (ATLTILLGVFFLCWGPFFLHLSLIVL). The Extracellular portion of the chain corresponds to 267–279 (CPQHPTCGCIFKN). The helical transmembrane segment at 280-300 (FNLFLALIICNAIVDPLIYAF) threads the bilayer. Over 301–317 (RSQELRKTLQEVLQCSW) the chain is Cytoplasmic. Residue Cys315 is the site of S-palmitoyl cysteine attachment.

It belongs to the G-protein coupled receptor 1 family. As to quaternary structure, interacts with MGRN1, but does not undergo MGRN1-mediated ubiquitination; this interaction competes with GNAS-binding and thus inhibits agonist-induced cAMP production. Interacts with OPN3; the interaction results in a decrease in MC1R-mediated cAMP signaling and ultimately a decrease in melanin production in melanocytes.

The protein localises to the cell membrane. In terms of biological role, receptor for MSH (alpha, beta and gamma) and ACTH. The activity of this receptor is mediated by G proteins which activate adenylate cyclase. Mediates melanogenesis, the production of eumelanin (black/brown) and phaeomelanin (red/yellow), via regulation of cAMP signaling in melanocytes. The protein is Melanocyte-stimulating hormone receptor (MC1R) of Cervus elaphus (Red deer).